A 359-amino-acid polypeptide reads, in one-letter code: Ribosomal RNA large subunit methyltransferase M (359 aa).

S-adenosyl-L-methionine contacts are provided by residues Ser-186, 219–222 (CPGG), Asp-238, Asp-258, and Asp-275. Catalysis depends on Lys-304, which acts as the Proton acceptor.

This sequence belongs to the class I-like SAM-binding methyltransferase superfamily. RNA methyltransferase RlmE family. RlmM subfamily. In terms of assembly, monomer.

The protein localises to the cytoplasm. It catalyses the reaction cytidine(2498) in 23S rRNA + S-adenosyl-L-methionine = 2'-O-methylcytidine(2498) in 23S rRNA + S-adenosyl-L-homocysteine + H(+). Catalyzes the 2'-O-methylation at nucleotide C2498 in 23S rRNA. The polypeptide is Ribosomal RNA large subunit methyltransferase M (Vibrio vulnificus (strain YJ016)).